Reading from the N-terminus, the 215-residue chain is Orotate phosphoribosyltransferase (215 aa).

A 5-phospho-alpha-D-ribose 1-diphosphate-binding site is contributed by K26. 34–35 lines the orotate pocket; the sequence is FF. 5-phospho-alpha-D-ribose 1-diphosphate is bound by residues 72–73, R99, K100, K103, H105, and 124–132; these read YK and DDVITAGTA. The orotate site is built by T128 and R156.

Belongs to the purine/pyrimidine phosphoribosyltransferase family. PyrE subfamily. As to quaternary structure, homodimer. Mg(2+) serves as cofactor.

The catalysed reaction is orotidine 5'-phosphate + diphosphate = orotate + 5-phospho-alpha-D-ribose 1-diphosphate. It participates in pyrimidine metabolism; UMP biosynthesis via de novo pathway; UMP from orotate: step 1/2. Catalyzes the transfer of a ribosyl phosphate group from 5-phosphoribose 1-diphosphate to orotate, leading to the formation of orotidine monophosphate (OMP). This is Orotate phosphoribosyltransferase from Shewanella oneidensis (strain ATCC 700550 / JCM 31522 / CIP 106686 / LMG 19005 / NCIMB 14063 / MR-1).